The primary structure comprises 261 residues: Polycomb group RING finger protein 1 (261 aa).

Residues 45-84 (CYLCAGYFIDATTITECLHTFCKSCIVKYLQTSKYCPMCN) form an RING-type zinc finger.

As to quaternary structure, component of a PRC1-like complex.

It is found in the nucleus. Component of a Polycomb group (PcG) multiprotein PRC1-like complex, a complex class required to maintain the transcriptionally repressive state of many genes, including Hox genes, throughout development. PcG PRC1 complex acts via chromatin remodeling and modification of histones; it mediates monoubiquitination of histone H2A 'Lys-119', rendering chromatin heritably changed in its expressibility. The polypeptide is Polycomb group RING finger protein 1 (pcgf1) (Danio rerio (Zebrafish)).